The sequence spans 205 residues: Proteasome subunit beta (205 aa).

A propeptide spans Met1–Gly8 (removed in mature form; by autocatalysis). The Nucleophile role is filled by Thr9.

This sequence belongs to the peptidase T1B family. As to quaternary structure, the 20S proteasome core is composed of 14 alpha and 14 beta subunits that assemble into four stacked heptameric rings, resulting in a barrel-shaped structure. The two inner rings, each composed of seven catalytic beta subunits, are sandwiched by two outer rings, each composed of seven alpha subunits. The catalytic chamber with the active sites is on the inside of the barrel. Has a gated structure, the ends of the cylinder being occluded by the N-termini of the alpha-subunits. Is capped at one or both ends by the proteasome regulatory ATPase, PAN.

The protein resides in the cytoplasm. The catalysed reaction is Cleavage of peptide bonds with very broad specificity.. With respect to regulation, the formation of the proteasomal ATPase PAN-20S proteasome complex, via the docking of the C-termini of PAN into the intersubunit pockets in the alpha-rings, triggers opening of the gate for substrate entry. Interconversion between the open-gate and close-gate conformations leads to a dynamic regulation of the 20S proteasome proteolysis activity. Functionally, component of the proteasome core, a large protease complex with broad specificity involved in protein degradation. The sequence is that of Proteasome subunit beta from Methanocella paludicola (strain DSM 17711 / JCM 13418 / NBRC 101707 / SANAE).